A 372-amino-acid polypeptide reads, in one-letter code: Glutamate 5-kinase (372 aa).

Lysine 14 is a binding site for ATP. Residues serine 54, aspartate 141, and asparagine 153 each contribute to the substrate site. Residue 173 to 174 (TD) participates in ATP binding. Residues 280 to 358 (RGTLVLDDGA…DAIVGLLGYM (79 aa)) form the PUA domain.

Belongs to the glutamate 5-kinase family.

The protein resides in the cytoplasm. It catalyses the reaction L-glutamate + ATP = L-glutamyl 5-phosphate + ADP. It participates in amino-acid biosynthesis; L-proline biosynthesis; L-glutamate 5-semialdehyde from L-glutamate: step 1/2. Functionally, catalyzes the transfer of a phosphate group to glutamate to form L-glutamate 5-phosphate. The chain is Glutamate 5-kinase from Pseudomonas fluorescens (strain Pf0-1).